Here is a 27-residue protein sequence, read N- to C-terminus: Defensin-like protein 2 (27 aa).

Residue Q1 is modified to Pyrrolidone carboxylic acid.

The protein belongs to the DEFL family. As to quaternary structure, forms oligomers in its native state.

Functionally, possesses some antifungal activity sensitive to inorganic cations and antibacterial activity against B.megaterium. The polypeptide is Defensin-like protein 2 (Brassica campestris (Field mustard)).